The primary structure comprises 208 residues: Thioesterase 1/protease 1/lysophospholipase L1 (208 aa).

An N-terminal signal peptide occupies residues 1–26 (MMNFNNVFRWHLPFLFLVLLTFRAAA). The Nucleophile role is filled by Ser-36. Gly-70 and Asn-99 together coordinate substrate. Catalysis depends on residues Asp-180 and His-183.

This sequence belongs to the 'GDSL' lipolytic enzyme family. In terms of assembly, monomer or homotetramer.

Its subcellular location is the periplasm. It catalyses the reaction a fatty acyl-CoA + H2O = a fatty acid + CoA + H(+). The catalysed reaction is hexadecanoyl-CoA + H2O = hexadecanoate + CoA + H(+). It carries out the reaction (9Z)-hexadecenoyl-CoA + H2O = (9Z)-hexadecenoate + CoA + H(+). The enzyme catalyses octadecanoyl-CoA + H2O = octadecanoate + CoA + H(+). It catalyses the reaction (9Z)-octadecenoyl-CoA + H2O = (9Z)-octadecenoate + CoA + H(+). The catalysed reaction is (9Z)-octadecenoyl-[ACP] + H2O = (9Z)-octadecenoate + holo-[ACP] + H(+). It carries out the reaction (11Z)-octadecenoyl-CoA + H2O = (11Z)-octadecenoate + CoA + H(+). The enzyme catalyses tetradecanoyl-CoA + H2O = tetradecanoate + CoA + H(+). It catalyses the reaction (5Z,8Z,11Z,14Z)-eicosatetraenoyl-CoA + H2O = (5Z,8Z,11Z,14Z)-eicosatetraenoate + CoA + H(+). The catalysed reaction is dodecanoyl-CoA + H2O = dodecanoate + CoA + H(+). It carries out the reaction decanoyl-CoA + H2O = decanoate + CoA + H(+). The enzyme catalyses hexanoyl-CoA + H2O = hexanoate + CoA + H(+). It catalyses the reaction a 1-acyl-sn-glycero-3-phosphocholine + H2O = sn-glycerol 3-phosphocholine + a fatty acid + H(+). The catalysed reaction is a phenyl acetate + H2O = a phenol + acetate + H(+). It carries out the reaction a butanoate ester + H2O = an aliphatic alcohol + butanoate + H(+). The enzyme catalyses a hexanoate ester + H2O = an aliphatic alcohol + hexanoate + H(+). It catalyses the reaction an octanoate ester + H2O = an aliphatic alcohol + octanoate + H(+). TesA is a multifunctional esterase that can act as a thioesterase, arylesterase, lysophospholipase and protease. This chain is Thioesterase 1/protease 1/lysophospholipase L1 (tesA), found in Escherichia coli O6:H1 (strain CFT073 / ATCC 700928 / UPEC).